The sequence spans 1288 residues: MAGPCPRSGAERAGSCWQDPLAVALSRGRQLAAPPGRGCARSRPLSVVYVLTREPQPGLEPREGTEAEPLPLRCLREACAQVPRPRPPPQLRSLPFGTLELGDTAALDAFYNADVVVLEVSSSLVQPSLFYHLGVRESFSMTNNVLLCSQADLPDLQALREDVFQKNSDCVGSYTLIPYVVTATGRVLCGDAGLLRGLADGLVQAGVGTEALLTPLVGRLARLLEATPTDSCGYFRETIRRDIRQARERFSGPQLRQELARLQRRLDSVELLSPDIIMNLLLSYRDVQDYSAIIELVETLQALPTCDVAEQHNVCFHYTFALNRRNRPGDRAKALSVLLPLVQLEGSVAPDLYCMCGRIYKDMFFSSGFQDAGHREQAYHWYRKAFDVEPSLHSGINAAVLLIAAGQHFEDSKELRLIGMKLGCLLARKGCVEKMQYYWDVGFYLGAQILANDPTQVVLAAEQLYKLNAPIWYLVSVMETFLLYQHFRPTPEPPGGPPRRAHFWLHFLLQSCQPFKTACAQGDQCLVLVLEMNKVLLPAKLEVRGTDPVSTVTLSLLEPETQDIPSSWTFPVASICGVSASKRDERCCFLYALPPAQDVQLCFPSVGHCQWFCGLIQAWVTNPDSTAPAEEAEGAGEMLEFDYEYTETGERLVLGKGTYGVVYAGRDRHTRVRIAIKEIPERDSRFSQPLHEEIALHRRLRHKNIVRYLGSASQGGYLKIFMEEVPGGSLSSLLRSVWGPLKDNESTISFYTRQILQGLGYLHDNHIVHRDIKGDNVLINTFSGLLKISDFGTSKRLAGITPCTETFTGTLQYMAPEIIDQGPRGYGKAADIWSLGCTVIEMATGRPPFHELGSPQAAMFQVGMYKVHPPMPSSLSAEAQAFLLRTFEPDPRLRASAQTLLGDPFLQPGKRSRSPSSPRHAPRPSDAPSASPTPSANSTTQSQTFPCPQAPSQHPPSPPKRCLSYGGTSQLRVPEEPAAEEPASPEESSGLSLLHQESKRRAMLAAVLEQELPALAENLHQEQKQEQGARLGRNHVEELLRCLGAHIHTPNRRQLAQELRALQGRLRAQGLGPALLHRPLFAFPDAVKQILRKRQIRPHWMFVLDSLLSRAVRAALGVLGPEVEKEAVSPRSEELSNEGDSQQSPGQQSPLPVEPEQGPAPLMVQLSLLRAETDRLREILAGKEREYQALVQRALQRLNEEARTYVLAPEPPTALSTDQGLVQWLQELNVDSGTIQMLLNHSFTLHTLLTYATRDDLIYTRIRGGMVCRIWRAILAQRAGSTPVTSGP.

The region spanning 648 to 906 (TGERLVLGKG…AQTLLGDPFL (259 aa)) is the Protein kinase domain. Residues 654-662 (LGKGTYGVV) and Lys-677 each bind ATP. The active-site Proton acceptor is the Asp-771. The residue at position 806 (Thr-806) is a Phosphothreonine. Residues 899–997 (TLLGDPFLQP…SSGLSLLHQE (99 aa)) form a disordered region. Residues 914–952 (SPSSPRHAPRPSDAPSASPTPSANSTTQSQTFPCPQAPS) are compositionally biased toward low complexity. Phosphoserine is present on residues Ser-964 and Ser-984. Residues 980–989 (EEPASPEESS) show a composition bias toward low complexity. Positions 1004–1029 (LAAVLEQELPALAENLHQEQKQEQGA) form a coiled coil. The span at 1123-1134 (VEKEAVSPRSEE) shows a compositional bias: basic and acidic residues. The disordered stretch occupies residues 1123–1157 (VEKEAVSPRSEELSNEGDSQQSPGQQSPLPVEPEQ). Phosphoserine occurs at positions 1129 and 1149. The span at 1141–1151 (SQQSPGQQSPL) shows a compositional bias: low complexity. Residues 1166 to 1205 (LSLLRAETDRLREILAGKEREYQALVQRALQRLNEEARTY) adopt a coiled-coil conformation.

This sequence belongs to the protein kinase superfamily. STE Ser/Thr protein kinase family. MAP kinase kinase kinase subfamily. Binds both upstream activators and downstream substrates in multimolecular complexes. Mg(2+) is required as a cofactor.

The enzyme catalyses L-seryl-[protein] + ATP = O-phospho-L-seryl-[protein] + ADP + H(+). It carries out the reaction L-threonyl-[protein] + ATP = O-phospho-L-threonyl-[protein] + ADP + H(+). Its activity is regulated as follows. Activated by phosphorylation on Thr-806. Catalytically active only when complexed with MAP3K5, with MAP3K5 supporting the stability and the active configuration of MAP3K6 and MAP3K6 activating MAP3K5 by direct phosphorylation. Functionally, component of a protein kinase signal transduction cascade. Activates the JNK, but not ERK or p38 kinase pathways. The sequence is that of Mitogen-activated protein kinase kinase kinase 6 (MAP3K6) from Homo sapiens (Human).